Here is a 195-residue protein sequence, read N- to C-terminus: MQNLNDSSISVDLTIDLSLSGFTFDLMKDSIDSKMIDLIMDCDTWRNSIVSWFDCILMQPNLTCPQIVRKNRFFSMGLLFTNDLSIRQMNKEWRKKDESTDVLSFPAIDEHIVLPPNQFLELGDIIVSVETAFKQAKIHNHSLMHELRWLVSHGFLHLLGWDHPSSASLNEMLSFQELLLKTPNGSPLRNSMRDY.

Zn(2+) contacts are provided by histidine 153, histidine 157, and histidine 163.

It belongs to the endoribonuclease YbeY family. Zn(2+) serves as cofactor.

The protein localises to the cytoplasm. Its function is as follows. Single strand-specific metallo-endoribonuclease involved in late-stage 70S ribosome quality control and in maturation of the 3' terminus of the 16S rRNA. This is Endoribonuclease YbeY from Prochlorococcus marinus (strain SARG / CCMP1375 / SS120).